Here is a 20-residue protein sequence, read N- to C-terminus: Beta-1,3-glucan-binding protein 2 (20 aa).

The protein belongs to the insect beta-1,3-glucan binding protein family. In terms of assembly, monomer.

The protein localises to the secreted. Functionally, involved in the recognition of invading microorganisms causing their aggregation. Activates the phenoloxidase cascade. Binds specifically to beta-1,3-glucan. Binds the A.niger cell wall component alpha-1,3-glucan, a fungal pathogen-associated molecular pattern (PAMP) that activates the host immune response. This is Beta-1,3-glucan-binding protein 2 from Galleria mellonella (Greater wax moth).